A 232-amino-acid chain; its full sequence is Large ribosomal subunit protein uL1 (232 aa).

The protein belongs to the universal ribosomal protein uL1 family. Part of the 50S ribosomal subunit.

Functionally, binds directly to 23S rRNA. The L1 stalk is quite mobile in the ribosome, and is involved in E site tRNA release. Its function is as follows. Protein L1 is also a translational repressor protein, it controls the translation of the L11 operon by binding to its mRNA. The protein is Large ribosomal subunit protein uL1 of Rhizobium meliloti (strain 1021) (Ensifer meliloti).